The chain runs to 472 residues: Nuclear hormone receptor family member nhr-2 (472 aa).

Composition is skewed to polar residues over residues 57 to 83 (TATN…LSQI), 90 to 112 (NDTI…HNQP), 138 to 147 (LSSTQSSPDN), and 159 to 171 (VRRN…SAST). 2 disordered regions span residues 57–112 (TATN…HNQP) and 138–184 (LSST…RTNT). The nuclear receptor DNA-binding region spans 215-297 (KDRCMVCGDN…VGMNRDNVRV (83 aa)). 2 NR C4-type zinc fingers span residues 218–238 (CMVC…CEGC) and 267–285 (CAAN…FAKC).

This sequence belongs to the nuclear hormone receptor family.

The protein resides in the nucleus. Functionally, orphan nuclear receptor. This Caenorhabditis elegans protein is Nuclear hormone receptor family member nhr-2 (nhr-2).